Consider the following 285-residue polypeptide: Phosphatidylserine decarboxylase proenzyme (285 aa).

Catalysis depends on charge relay system; for autoendoproteolytic cleavage activity residues Asp89, His146, and Ser252. Ser252 functions as the Schiff-base intermediate with substrate; via pyruvic acid; for decarboxylase activity in the catalytic mechanism. A Pyruvic acid (Ser); by autocatalysis modification is found at Ser252.

It belongs to the phosphatidylserine decarboxylase family. PSD-B subfamily. Prokaryotic type I sub-subfamily. In terms of assembly, heterodimer of a large membrane-associated beta subunit and a small pyruvoyl-containing alpha subunit. Requires pyruvate as cofactor. Post-translationally, is synthesized initially as an inactive proenzyme. Formation of the active enzyme involves a self-maturation process in which the active site pyruvoyl group is generated from an internal serine residue via an autocatalytic post-translational modification. Two non-identical subunits are generated from the proenzyme in this reaction, and the pyruvate is formed at the N-terminus of the alpha chain, which is derived from the carboxyl end of the proenzyme. The autoendoproteolytic cleavage occurs by a canonical serine protease mechanism, in which the side chain hydroxyl group of the serine supplies its oxygen atom to form the C-terminus of the beta chain, while the remainder of the serine residue undergoes an oxidative deamination to produce ammonia and the pyruvoyl prosthetic group on the alpha chain. During this reaction, the Ser that is part of the protease active site of the proenzyme becomes the pyruvoyl prosthetic group, which constitutes an essential element of the active site of the mature decarboxylase.

Its subcellular location is the cell membrane. The catalysed reaction is a 1,2-diacyl-sn-glycero-3-phospho-L-serine + H(+) = a 1,2-diacyl-sn-glycero-3-phosphoethanolamine + CO2. The protein operates within phospholipid metabolism; phosphatidylethanolamine biosynthesis; phosphatidylethanolamine from CDP-diacylglycerol: step 2/2. In terms of biological role, catalyzes the formation of phosphatidylethanolamine (PtdEtn) from phosphatidylserine (PtdSer). In Vibrio vulnificus (strain CMCP6), this protein is Phosphatidylserine decarboxylase proenzyme.